An 885-amino-acid polypeptide reads, in one-letter code: Alanine--tRNA ligase (885 aa).

Residues His574, His578, Cys676, and His680 each contribute to the Zn(2+) site.

This sequence belongs to the class-II aminoacyl-tRNA synthetase family. It depends on Zn(2+) as a cofactor.

Its subcellular location is the cytoplasm. It catalyses the reaction tRNA(Ala) + L-alanine + ATP = L-alanyl-tRNA(Ala) + AMP + diphosphate. Its function is as follows. Catalyzes the attachment of alanine to tRNA(Ala) in a two-step reaction: alanine is first activated by ATP to form Ala-AMP and then transferred to the acceptor end of tRNA(Ala). Also edits incorrectly charged Ser-tRNA(Ala) and Gly-tRNA(Ala) via its editing domain. The polypeptide is Alanine--tRNA ligase (Syntrophobacter fumaroxidans (strain DSM 10017 / MPOB)).